We begin with the raw amino-acid sequence, 132 residues long: Small ribosomal subunit protein uS9 (132 aa).

It belongs to the universal ribosomal protein uS9 family.

In Mycoplasma genitalium (strain ATCC 33530 / DSM 19775 / NCTC 10195 / G37) (Mycoplasmoides genitalium), this protein is Small ribosomal subunit protein uS9 (rpsI).